Here is a 254-residue protein sequence, read N- to C-terminus: Thiazole synthase (254 aa).

Lys-96 acts as the Schiff-base intermediate with DXP in catalysis. Residues Gly-157, 183-184, and 205-206 contribute to the 1-deoxy-D-xylulose 5-phosphate site; these read AG and NT.

Belongs to the ThiG family. Homotetramer. Forms heterodimers with either ThiH or ThiS.

Its subcellular location is the cytoplasm. The catalysed reaction is [ThiS sulfur-carrier protein]-C-terminal-Gly-aminoethanethioate + 2-iminoacetate + 1-deoxy-D-xylulose 5-phosphate = [ThiS sulfur-carrier protein]-C-terminal Gly-Gly + 2-[(2R,5Z)-2-carboxy-4-methylthiazol-5(2H)-ylidene]ethyl phosphate + 2 H2O + H(+). It functions in the pathway cofactor biosynthesis; thiamine diphosphate biosynthesis. Catalyzes the rearrangement of 1-deoxy-D-xylulose 5-phosphate (DXP) to produce the thiazole phosphate moiety of thiamine. Sulfur is provided by the thiocarboxylate moiety of the carrier protein ThiS. In vitro, sulfur can be provided by H(2)S. The protein is Thiazole synthase of Clostridium kluyveri (strain ATCC 8527 / DSM 555 / NBRC 12016 / NCIMB 10680 / K1).